A 456-amino-acid chain; its full sequence is Bifunctional protein GlmU (456 aa).

Positions 1–229 (MTKKALSAVI…VMEVEGANNR (229 aa)) are pyrophosphorylase. Residues 11–14 (LAAG), Lys-25, Gln-76, 81–82 (GT), 103–105 (YGD), Gly-140, Glu-154, Asn-169, and Asn-227 contribute to the UDP-N-acetyl-alpha-D-glucosamine site. Asp-105 lines the Mg(2+) pocket. Position 227 (Asn-227) interacts with Mg(2+). The interval 230–250 (LQLAALERYFQNKQASKLLLE) is linker. Residues 251 to 456 (GVMIYDPARF…QGWQRPIKKK (206 aa)) form an N-acetyltransferase region. UDP-N-acetyl-alpha-D-glucosamine-binding residues include Arg-333 and Lys-351. The active-site Proton acceptor is the His-363. Residues Tyr-366 and Asn-377 each contribute to the UDP-N-acetyl-alpha-D-glucosamine site. Acetyl-CoA is bound by residues Ala-380, 386–387 (NY), Ser-405, Ala-423, and Arg-440.

It in the N-terminal section; belongs to the N-acetylglucosamine-1-phosphate uridyltransferase family. The protein in the C-terminal section; belongs to the transferase hexapeptide repeat family. In terms of assembly, homotrimer. The cofactor is Mg(2+).

The protein resides in the cytoplasm. It catalyses the reaction alpha-D-glucosamine 1-phosphate + acetyl-CoA = N-acetyl-alpha-D-glucosamine 1-phosphate + CoA + H(+). The enzyme catalyses N-acetyl-alpha-D-glucosamine 1-phosphate + UTP + H(+) = UDP-N-acetyl-alpha-D-glucosamine + diphosphate. The protein operates within nucleotide-sugar biosynthesis; UDP-N-acetyl-alpha-D-glucosamine biosynthesis; N-acetyl-alpha-D-glucosamine 1-phosphate from alpha-D-glucosamine 6-phosphate (route II): step 2/2. It participates in nucleotide-sugar biosynthesis; UDP-N-acetyl-alpha-D-glucosamine biosynthesis; UDP-N-acetyl-alpha-D-glucosamine from N-acetyl-alpha-D-glucosamine 1-phosphate: step 1/1. It functions in the pathway bacterial outer membrane biogenesis; LPS lipid A biosynthesis. In terms of biological role, catalyzes the last two sequential reactions in the de novo biosynthetic pathway for UDP-N-acetylglucosamine (UDP-GlcNAc). The C-terminal domain catalyzes the transfer of acetyl group from acetyl coenzyme A to glucosamine-1-phosphate (GlcN-1-P) to produce N-acetylglucosamine-1-phosphate (GlcNAc-1-P), which is converted into UDP-GlcNAc by the transfer of uridine 5-monophosphate (from uridine 5-triphosphate), a reaction catalyzed by the N-terminal domain. The chain is Bifunctional protein GlmU from Haemophilus influenzae (strain 86-028NP).